Reading from the N-terminus, the 343-residue chain is MITLSHITKQFTLGAQTITALSDVSLHVSAGQIYGVIGASGAGKSTLIRCVNLLERPTSGTVVVNSIDLTNLPERKLIDARRQIGMIFQHFNLLSSRTVAGNVALPLELDNLPKSAIARRVTELLALAGLEDKADSYPANLSGGQKQRVAIARALASNPKVLLCDEATSALDPATTHSILALLKDINQRLGLTILLITHEMDVVKRICDQVAVISQGELIEQDTVSEMFSHPKTPLAQAFIRSTLHLDIPQDYQQRMHRQRAPGRIPILQLEFTGLSVDAPLLSETARRFNVNNNIISAQMDYAGGVKFGIMLTEMDGDEADTASAIAYLQQHQVKVEVLGYV.

The region spanning 2–241 (ITLSHITKQF…PKTPLAQAFI (240 aa)) is the ABC transporter domain. 38–45 (GASGAGKS) provides a ligand contact to ATP.

It belongs to the ABC transporter superfamily. Methionine importer (TC 3.A.1.24) family. As to quaternary structure, the complex is composed of two ATP-binding proteins (MetN), two transmembrane proteins (MetI) and a solute-binding protein (MetQ).

Its subcellular location is the cell inner membrane. The enzyme catalyses L-methionine(out) + ATP + H2O = L-methionine(in) + ADP + phosphate + H(+). The catalysed reaction is D-methionine(out) + ATP + H2O = D-methionine(in) + ADP + phosphate + H(+). Part of the ABC transporter complex MetNIQ involved in methionine import. Responsible for energy coupling to the transport system. In Sodalis glossinidius (strain morsitans), this protein is Methionine import ATP-binding protein MetN.